Reading from the N-terminus, the 85-residue chain is Putative membrane protein insertion efficiency factor (85 aa).

The disordered stretch occupies residues 66–85 (PLNSGGDDPVPPKLDDNREH).

Belongs to the UPF0161 family.

Its subcellular location is the cell inner membrane. Functionally, could be involved in insertion of integral membrane proteins into the membrane. The sequence is that of Putative membrane protein insertion efficiency factor from Yersinia pestis bv. Antiqua (strain Antiqua).